A 159-amino-acid polypeptide reads, in one-letter code: 2-C-methyl-D-erythritol 2,4-cyclodiphosphate synthase (159 aa).

Residues D10 and H12 each coordinate a divalent metal cation. 4-CDP-2-C-methyl-D-erythritol 2-phosphate contacts are provided by residues 10 to 12 (DVH) and 36 to 37 (HS). Residue H44 participates in a divalent metal cation binding. Residues 58–60 (DIG), 63–67 (FPDTD), 102–108 (AQAPKMA), 134–137 (TTTE), F141, and R144 each bind 4-CDP-2-C-methyl-D-erythritol 2-phosphate.

The protein belongs to the IspF family. Homotrimer. A divalent metal cation is required as a cofactor.

The enzyme catalyses 4-CDP-2-C-methyl-D-erythritol 2-phosphate = 2-C-methyl-D-erythritol 2,4-cyclic diphosphate + CMP. Its pathway is isoprenoid biosynthesis; isopentenyl diphosphate biosynthesis via DXP pathway; isopentenyl diphosphate from 1-deoxy-D-xylulose 5-phosphate: step 4/6. Functionally, involved in the biosynthesis of isopentenyl diphosphate (IPP) and dimethylallyl diphosphate (DMAPP), two major building blocks of isoprenoid compounds. Catalyzes the conversion of 4-diphosphocytidyl-2-C-methyl-D-erythritol 2-phosphate (CDP-ME2P) to 2-C-methyl-D-erythritol 2,4-cyclodiphosphate (ME-CPP) with a corresponding release of cytidine 5-monophosphate (CMP). The chain is 2-C-methyl-D-erythritol 2,4-cyclodiphosphate synthase from Shewanella piezotolerans (strain WP3 / JCM 13877).